We begin with the raw amino-acid sequence, 312 residues long: Nucleosome assembly protein 1-like 4 (312 aa).

Positions 24 to 78 (VETLKNKLQALAEQHVDVLESLAPSVRKRVDVLMEIQSQHDELEVKFFEEKAALE) form a coiled coil. The Nuclear export signal signature appears at 45-60 (LAPSVRKRVDVLMEIQ). Positions 288-312 (EDYGASWVDDEEEDDNDDEYSDEEA) are disordered.

It belongs to the nucleosome assembly protein (NAP) family.

The protein localises to the nucleus. It is found in the cytoplasm. May modulate chromatin structure by regulation of nucleosome assembly/disassembly. This Oryza sativa subsp. indica (Rice) protein is Nucleosome assembly protein 1-like 4.